Here is a 274-residue protein sequence, read N- to C-terminus: Nuclease (274 aa).

An N-terminal signal peptide occupies residues methionine 1–serine 24. Histidine 124 functions as the Proton acceptor in the catalytic mechanism. Residues asparagine 155, aspartate 246, glutamate 249, aspartate 255, phenylalanine 256, glutamine 265, and glutamate 269 each coordinate Mn(2+).

Belongs to the DNA/RNA non-specific endonuclease family. In terms of assembly, monomer. The cofactor is Mn(2+). It depends on Mg(2+) as a cofactor. Requires Ca(2+) as cofactor. Co(2+) is required as a cofactor. The N-terminus is blocked.

It localises to the periplasm. In terms of biological role, catalyzes the degradation of both RNA and DNA; has the potential to act as an endonuclease. The protein is Nuclease (nucA) of Nostoc sp. (strain PCC 7120 / SAG 25.82 / UTEX 2576).